Reading from the N-terminus, the 286-residue chain is 33 kDa chaperonin (286 aa).

2 disulfides stabilise this stretch: Cys-225/Cys-227 and Cys-258/Cys-261.

The protein belongs to the HSP33 family. In terms of processing, under oxidizing conditions two disulfide bonds are formed involving the reactive cysteines. Under reducing conditions zinc is bound to the reactive cysteines and the protein is inactive.

Its subcellular location is the cytoplasm. In terms of biological role, redox regulated molecular chaperone. Protects both thermally unfolding and oxidatively damaged proteins from irreversible aggregation. Plays an important role in the bacterial defense system toward oxidative stress. The polypeptide is 33 kDa chaperonin (Shewanella sp. (strain MR-4)).